The primary structure comprises 219 residues: Carbonic anhydrase 1 (219 aa).

Zn(2+)-binding residues include Cys39, Asp41, His98, and Cys101.

Belongs to the beta-class carbonic anhydrase family. As to quaternary structure, oligomer. The cofactor is Zn(2+).

It carries out the reaction hydrogencarbonate + H(+) = CO2 + H2O. Reversible hydration of carbon dioxide. Carbon dioxide formed in the bicarbonate-dependent decomposition of cyanate by cyanase (CynS) diffuses out of the cell faster than it would be hydrated to bicarbonate, so the apparent function of this enzyme is to catalyze the hydration of carbon dioxide and thus prevent depletion of cellular bicarbonate. This Escherichia coli O157:H7 protein is Carbonic anhydrase 1 (cynT).